The sequence spans 704 residues: Polyribonucleotide nucleotidyltransferase (704 aa).

The Mg(2+) site is built by Asp487 and Asp493. One can recognise a KH domain in the interval 554–613 (PRLLTIKIHPDKIREVIGKGGSTIQAITKETGTQIDIQDDGTIIIASVNAIAAQAAKSRI). Residues 623–691 (GRIYEGKVAK…KQGRIRLSIK (69 aa)) form the S1 motif domain.

Belongs to the polyribonucleotide nucleotidyltransferase family. In terms of assembly, component of the RNA degradosome, which is a multiprotein complex involved in RNA processing and mRNA degradation. Mg(2+) is required as a cofactor.

The protein resides in the cytoplasm. It catalyses the reaction RNA(n+1) + phosphate = RNA(n) + a ribonucleoside 5'-diphosphate. In terms of biological role, involved in mRNA degradation. Catalyzes the phosphorolysis of single-stranded polyribonucleotides processively in the 3'- to 5'-direction. The sequence is that of Polyribonucleotide nucleotidyltransferase from Xanthomonas oryzae pv. oryzae (strain MAFF 311018).